Reading from the N-terminus, the 672-residue chain is Zinc finger and BTB domain-containing protein 24 (672 aa).

A BTB domain is found at 39-105 (CDITLIVEDV…MYSAVVLVDE (67 aa)). The segment at 136-208 (HMQVKRKRGR…GKRKIKQPIR (73 aa)) is disordered. The segment at residues 140-152 (KRKRGRPKKNQDL) is a DNA-binding region (a.T hook 1). Positions 148–158 (KNQDLSQKENP) are enriched in basic and acidic residues. A compositionally biased stretch (polar residues) spans 160–171 (SELQAQTSSEIQ). The segment covering 198–208 (EGKRKIKQPIR) has biased composition (basic residues). Residues 223–235 (PGKRGRRRKYPDT) constitute a DNA-binding region (a.T hook 2). 8 C2H2-type zinc fingers span residues 237–259 (ARCEECGKVFKSHLFLKIHQRTH), 265–287 (FRCSVCGKEFTQKHTLLVHQRMH), 293–315 (YICTVCSKALSTKHSLLEHMNLH), 321–343 (FTCEECGKSFSQQRQLKSHNRVH), 349–371 (PECAECHHKFMDAAQLKKHLRTH), 377–399 (FTCEICGKCFTAKSTLQTHIRIH), 405–427 (YVCKVCDKTFSDPSARRRHEVSH), and 433–455 (FSCSICKVSFARKDNLKAHIKTH). Residues 453-492 (KTHNKENPPAQAESTDKPPQSAPEQQEQEQQQQQQTSGDK) are disordered. Residues 476-487 (EQQEQEQQQQQQ) are compositionally biased toward low complexity.

It belongs to the krueppel C2H2-type zinc-finger protein family.

It localises to the nucleus. May be involved in BMP2-induced transcription. In Danio rerio (Zebrafish), this protein is Zinc finger and BTB domain-containing protein 24 (zbtb24).